The chain runs to 382 residues: Putative phospholipase A1 (382 aa).

The signal sequence occupies residues 1–27; the sequence is MPTMGAEMNTRNMRYILLTGLLPMASA. The Periplasmic portion of the chain corresponds to 28–65; the sequence is FGETALQCAALTDNVTRLACYDRIFAAQLPSSAGQEGQ. Residues 66–78 form a beta stranded membrane-spanning segment; sequence ESKAVLNLTETVR. The Extracellular portion of the chain corresponds to 79–168; that stretch reads SSLDKGEAVI…VQEKFGQQKR (90 aa). Residues 169–183 form a beta stranded membrane-spanning segment; that stretch reads AETKLQVSFKSKIAE. Residues 184 to 189 are Periplasmic-facing; that stretch reads DLFKTR. Residues 190 to 202 traverse the membrane as a beta stranded segment; that stretch reads ADLWFGYTQRSDW. At 203–213 the chain is on the extracellular side; the sequence is QIYNQGRKSAP. A Ca(2+)-binding site is contributed by S211. A beta stranded membrane pass occupies residues 214–233; that stretch reads FRNTDYKPEIFLTQPVKADL. Over 234–236 the chain is Periplasmic; the sequence is PFG. A beta stranded membrane pass occupies residues 237 to 250; that stretch reads GRLRMLGAGFVHQS. H248 functions as the Proton acceptor in the catalytic mechanism. S250 functions as the Nucleophile in the catalytic mechanism. Topologically, residues 251 to 259 are extracellular; that stretch reads NGQSRPESR. S258 is a binding site for Ca(2+). The chain crosses the membrane as a beta stranded span at residues 260–272; it reads SWNRIYAMAGMEW. Over 273–274 the chain is Periplasmic; it reads GK. A beta stranded transmembrane segment spans residues 275-284; the sequence is LTVIPRVWVR. The Extracellular portion of the chain corresponds to 285 to 306; sequence AFDQSGDKNDNPDIADYMGYGD. D294 lines the Ca(2+) pocket. A beta stranded transmembrane segment spans residues 307-313; it reads VKLQYRL. Over 314–315 the chain is Periplasmic; that stretch reads ND. A beta stranded transmembrane segment spans residues 316-325; it reads RQNVYSVLRY. Topologically, residues 326–332 are extracellular; it reads NPKTGYG. A beta stranded membrane pass occupies residues 333-341; the sequence is AIEAAYTFP. Over 342–346 the chain is Periplasmic; sequence IKGKL. A beta stranded transmembrane segment spans residues 347–356; it reads KGVVRGFHGY. Topologically, residues 357–365 are extracellular; it reads GESLIDYNH. Residues 366–377 form a beta stranded membrane-spanning segment; that stretch reads KQNGIGIGLMFN. Residues 378-382 are Periplasmic-facing; that stretch reads DLDGI.

This sequence belongs to the phospholipase A1 family. Homodimer; dimerization is reversible, and the dimeric form is the active one. Ca(2+) is required as a cofactor.

The protein resides in the cell outer membrane. It catalyses the reaction a 1,2-diacyl-sn-glycero-3-phosphocholine + H2O = a 2-acyl-sn-glycero-3-phosphocholine + a fatty acid + H(+). The catalysed reaction is a 1,2-diacyl-sn-glycero-3-phosphocholine + H2O = a 1-acyl-sn-glycero-3-phosphocholine + a fatty acid + H(+). Hydrolysis of phosphatidylcholine with phospholipase A2 (EC 3.1.1.4) and phospholipase A1 (EC 3.1.1.32) activities. This is Putative phospholipase A1 from Neisseria meningitidis serogroup B (strain ATCC BAA-335 / MC58).